A 408-amino-acid chain; its full sequence is Phosphoglycerate kinase (408 aa).

Substrate contacts are provided by residues 22–24 (DIN), R39, 60–63 (HQSR), R117, and R157. Residues E332 and 358 to 361 (GGHT) each bind ATP.

It belongs to the phosphoglycerate kinase family. Monomer.

Its subcellular location is the cytoplasm. The enzyme catalyses (2R)-3-phosphoglycerate + ATP = (2R)-3-phospho-glyceroyl phosphate + ADP. The protein operates within carbohydrate degradation; glycolysis; pyruvate from D-glyceraldehyde 3-phosphate: step 2/5. The protein is Phosphoglycerate kinase of Thermoplasma volcanium (strain ATCC 51530 / DSM 4299 / JCM 9571 / NBRC 15438 / GSS1).